A 653-amino-acid polypeptide reads, in one-letter code: DNA-directed RNA polymerase III subunit RPC-3 (653 aa).

3 disordered regions span residues 141–186 (INGV…DSDP), 280–309 (DSSA…DFSD), and 422–442 (IKED…KRRG). The segment covering 159–170 (AENHTDHAHDYQ) has biased composition (basic and acidic residues). 2 stretches are compositionally biased toward acidic residues: residues 293 to 309 (PLED…DFSD) and 424 to 433 (EDEDDEDEEG). Residues 580–601 (TYKSMSRCLQRIRVEREKLKFL) are leucine-zipper.

It belongs to the RNA polymerase beta chain family. Component of the RNA polymerase III (Pol III) complex consisting of 17 subunits.

The protein resides in the nucleus. DNA-dependent RNA polymerase catalyzes the transcription of DNA into RNA using the four ribonucleoside triphosphates as substrates. Specific core component of RNA polymerase III which synthesizes small RNAs, such as 5S rRNA and tRNAs. This chain is DNA-directed RNA polymerase III subunit RPC-3 (RPC-82), found in Coccidioides immitis (strain RS) (Valley fever fungus).